The chain runs to 521 residues: Zinc finger protein GLIS2 (521 aa).

The tract at residues 35–174 is interaction with CTNND1; that stretch reads ALHRELGLVD…AKQLVCRWAK (140 aa). Disordered regions lie at residues 41 to 63 and 84 to 110; these read GLVD…LLNP and SPPS…DLPP. The segment covering 49 to 58 has biased composition (pro residues); it reads PGSPGSPPPG. The interval 71–137 is transcription activation; the sequence is GRFSAAPLVD…SSFQFFLPLG (67 aa). Residues 84–100 are compositionally biased toward low complexity; that stretch reads SPPSGLDSPNGSSSLSP. The interval 148 to 171 is transcription repression; sequence SFLPPPKDKCLSPELPLAKQLVCR. Residues 168-193 form a C2H2-type 1 zinc finger; sequence LVCRWAKCNQLFELLQDLVDHVNDHH. A C2H2-type 2; atypical zinc finger spans residues 202 to 229; it reads YCCHWEGCARHGRGFNARYKMLIHIRTH. 3 C2H2-type zinc fingers span residues 235–257, 263–287, and 293–317; these read HRCP…NRSH, YVCP…TRTH, and YYCK…IKAH. The tract at residues 436–501 is disordered; it reads AGSKAEGEKG…NSAASSPEVL (66 aa). Residues 455 to 470 are compositionally biased toward basic and acidic residues; sequence GLEDHKTPLERTERSR. The segment covering 487-496 has biased composition (polar residues); it reads DLSTGNSAAS.

Belongs to the GLI C2H2-type zinc-finger protein family. Interacts with CTBP1 and HDAC3. Interacts with CTNNB1 and CTNND1. Interacts with SUFU. Post-translationally, C-terminus cleavage is induced by interaction with CTNND1 and enhances by Src tyrosine kinase. In terms of tissue distribution, expressed at high levels in kidney, and at lower levels in heart and lung.

Its subcellular location is the nucleus speckle. It is found in the cytoplasm. In terms of biological role, can act either as a transcriptional repressor or as a transcriptional activator, depending on the cell context. Acts as a repressor of the Hedgehog signaling pathway. Represses the Hedgehog-dependent expression of Wnt4. Necessary to maintain the differentiated epithelial phenotype in renal cells through the inhibition of SNAI1, which itself induces the epithelial-to-mesenchymal transition. Represses transcriptional activation by CTNNB1 in the Wnt signaling pathway. May act by recruiting the corepressors CTBP1 and HDAC3. May be involved in neuron differentiation. This is Zinc finger protein GLIS2 (Glis2) from Mus musculus (Mouse).